The following is a 370-amino-acid chain: D-alanine--D-alanine ligase (370 aa).

The 209-residue stretch at K144–D352 folds into the ATP-grasp domain. E177–E232 provides a ligand contact to ATP. Residues D306, E319, and N321 each coordinate Mg(2+).

The protein belongs to the D-alanine--D-alanine ligase family. Mg(2+) serves as cofactor. It depends on Mn(2+) as a cofactor.

It localises to the cytoplasm. The catalysed reaction is 2 D-alanine + ATP = D-alanyl-D-alanine + ADP + phosphate + H(+). The protein operates within cell wall biogenesis; peptidoglycan biosynthesis. Functionally, cell wall formation. The polypeptide is D-alanine--D-alanine ligase (Listeria monocytogenes serotype 4b (strain F2365)).